Reading from the N-terminus, the 204-residue chain is Ribonuclease HII (204 aa).

The RNase H type-2 domain maps to 17-204 (QLVAGVDEVG…KPVQQLLQGD (188 aa)). 3 residues coordinate a divalent metal cation: D23, E24, and D115.

This sequence belongs to the RNase HII family. Requires Mn(2+) as cofactor. It depends on Mg(2+) as a cofactor.

The protein localises to the cytoplasm. The catalysed reaction is Endonucleolytic cleavage to 5'-phosphomonoester.. Its function is as follows. Endonuclease that specifically degrades the RNA of RNA-DNA hybrids. This is Ribonuclease HII from Hahella chejuensis (strain KCTC 2396).